Here is a 565-residue protein sequence, read N- to C-terminus: Ubiquitin carboxyl-terminal hydrolase 39 (565 aa).

2 stretches are compositionally biased toward basic and acidic residues: residues 1–21 (MSGRSKRESRGSTRGKRESES) and 28–39 (VKRERDREREPE). 2 disordered regions span residues 1 to 61 (MSGR…SARE) and 75 to 95 (EREVDEDSEPEREVRAKNGRV). The residue at position 46 (Ser46) is a Phosphoserine. A Glycyl lysine isopeptide (Lys-Gly) (interchain with G-Cter in SUMO2) cross-link involves residue Lys51. Residue Ser82 is modified to Phosphoserine. Positions 85 to 95 (EREVRAKNGRV) are enriched in basic and acidic residues. A UBP-type; degenerate zinc finger spans residues 103–200 (RHCPYLDTIN…YVLKPTFTKQ (98 aa)). Residues Cys136, Cys139, His155, and His161 each contribute to the Zn(2+) site. Residues 225–555 (VGLNNIKAND…EAYIQIWKRR (331 aa)) enclose the USP domain.

The protein belongs to the peptidase C19 family. As to quaternary structure, the U4/U6-U5 tri-snRNP complex is a building block of the precatalytic spliceosome (spliceosome B complex). Component of the U4/U6-U5 tri-snRNP complex composed of the U4, U6 and U5 snRNAs and at least PRPF3, PRPF4, PRPF6, PRPF8, PRPF31, SNRNP200, TXNL4A, SNRNP40, SNRPB, SNRPD1, SNRPD2, SNRPD3, SNRPE, SNRPF, SNRPG, DDX23, CD2BP2, PPIH, SNU13, EFTUD2, SART1 and USP39, plus LSM2, LSM3, LSM4, LSM5, LSM6, LSM7 and LSM8.

The protein resides in the nucleus. The enzyme catalyses Thiol-dependent hydrolysis of ester, thioester, amide, peptide and isopeptide bonds formed by the C-terminal Gly of ubiquitin (a 76-residue protein attached to proteins as an intracellular targeting signal).. Deubiquitinating enzyme that plays a role in many cellular processes including cellular antiviral response, epithelial morphogenesis, DNA repair or B-cell development. Plays a role in pre-mRNA splicing as a component of the U4/U6-U5 tri-snRNP, one of the building blocks of the precatalytic spliceosome. Specifically regulates immunoglobulin gene rearrangement in a spliceosome-dependent manner, which involves modulating chromatin interactions at the Igh locus and therefore plays an essential role in B-cell development. Regulates AURKB mRNA levels, and thereby plays a role in cytokinesis and in the spindle checkpoint. Regulates apoptosis and G2/M cell cycle checkpoint in response to DNA damage by deubiquitinating and stabilizing CHK2. Also plays an important role in DNA repair by controlling the recruitment of XRCC4/LIG4 to DNA double-strand breaks for non-homologous end-joining repair. Participates in antiviral activity by affecting the type I IFN signaling by stabilizing STAT1 and decreasing its 'Lys-6'-linked ubiquitination. Contributes to non-canonical Wnt signaling during epidermal differentiation. Acts as a negative regulator NF-kappa-B activation through deubiquitination of 'Lys-48'-linked ubiquitination of NFKBIA. This Homo sapiens (Human) protein is Ubiquitin carboxyl-terminal hydrolase 39.